The sequence spans 443 residues: Methyl-coenzyme M reductase subunit beta (443 aa).

Position 367 (Tyr-367) interacts with coenzyme M. Gly-369 serves as a coordination point for coenzyme B.

Belongs to the methyl-coenzyme M reductase beta subunit family. MCR is a hexamer of two alpha, two beta, and two gamma chains, forming a dimer of heterotrimers. Requires coenzyme F430 as cofactor.

Its subcellular location is the cytoplasm. The catalysed reaction is coenzyme B + methyl-coenzyme M = methane + coenzyme M-coenzyme B heterodisulfide. It participates in one-carbon metabolism; methyl-coenzyme M reduction; methane from methyl-coenzyme M: step 1/1. In terms of biological role, component of the methyl-coenzyme M reductase (MCR) I that catalyzes the reductive cleavage of methyl-coenzyme M (CoM-S-CH3 or 2-(methylthio)ethanesulfonate) using coenzyme B (CoB or 7-mercaptoheptanoylthreonine phosphate) as reductant which results in the production of methane and the mixed heterodisulfide of CoB and CoM (CoM-S-S-CoB). This is the final step in methanogenesis. The chain is Methyl-coenzyme M reductase subunit beta (mcrB) from Methanococcus vannielii.